A 71-amino-acid polypeptide reads, in one-letter code: Protein YqgC (71 aa).

In Escherichia coli (strain K12), this protein is Protein YqgC (yqgC).